The sequence spans 98 residues: N(2)-fixation sustaining protein CowN (98 aa).

This sequence belongs to the CowN family.

Functionally, is required to sustain N(2)-dependent growth in the presence of low levels of carbon monoxide (CO). Probably acts by protecting the N(2) fixation ability of the nitrogenase complex, which is inactivated in the presence of CO. This is N(2)-fixation sustaining protein CowN from Azospirillum sp. (strain B510).